We begin with the raw amino-acid sequence, 113 residues long: Large ribosomal subunit protein uL24 (113 aa).

The protein belongs to the universal ribosomal protein uL24 family. In terms of assembly, part of the 50S ribosomal subunit.

Its function is as follows. One of two assembly initiator proteins, it binds directly to the 5'-end of the 23S rRNA, where it nucleates assembly of the 50S subunit. Functionally, one of the proteins that surrounds the polypeptide exit tunnel on the outside of the subunit. This Chlamydia felis (strain Fe/C-56) (Chlamydophila felis) protein is Large ribosomal subunit protein uL24.